The following is a 70-amino-acid chain: Omega-conotoxin-like Bu1 (70 aa).

An N-terminal signal peptide occupies residues 1 to 22; that stretch reads MKLTCVAIVAVLLLTACQLITA. Residues 23 to 45 constitute a propeptide that is removed on maturation; sequence EDSRGTQLHRALRKTTKLSVSTR. Intrachain disulfides connect cysteine 46–cysteine 61, cysteine 53–cysteine 65, and cysteine 60–cysteine 70.

It belongs to the conotoxin O1 superfamily. Expressed by the venom duct.

It is found in the secreted. Its function is as follows. Omega-conotoxins act at presynaptic membranes, they bind and block voltage-gated calcium channels (Cav). The protein is Omega-conotoxin-like Bu1 of Conus bullatus (Bubble cone).